The primary structure comprises 294 residues: NAD kinase (294 aa).

The Proton acceptor role is filled by D74. NAD(+)-binding positions include 74–75 (DG), 148–149 (NE), H159, R176, D178, 189–194 (TAYSLS), and Q249.

It belongs to the NAD kinase family. It depends on a divalent metal cation as a cofactor.

The protein resides in the cytoplasm. The enzyme catalyses NAD(+) + ATP = ADP + NADP(+) + H(+). Involved in the regulation of the intracellular balance of NAD and NADP, and is a key enzyme in the biosynthesis of NADP. Catalyzes specifically the phosphorylation on 2'-hydroxyl of the adenosine moiety of NAD to yield NADP. This Vibrio vulnificus (strain YJ016) protein is NAD kinase.